The following is a 387-amino-acid chain: 3-ketoacyl-CoA thiolase (387 aa).

The active-site Acyl-thioester intermediate is the Cys-91. Catalysis depends on proton acceptor residues His-343 and Cys-373.

The protein belongs to the thiolase-like superfamily. Thiolase family. In terms of assembly, heterotetramer of two alpha chains (FadB) and two beta chains (FadA).

Its subcellular location is the cytoplasm. The enzyme catalyses an acyl-CoA + acetyl-CoA = a 3-oxoacyl-CoA + CoA. The protein operates within lipid metabolism; fatty acid beta-oxidation. Catalyzes the final step of fatty acid oxidation in which acetyl-CoA is released and the CoA ester of a fatty acid two carbons shorter is formed. The polypeptide is 3-ketoacyl-CoA thiolase (Escherichia coli O139:H28 (strain E24377A / ETEC)).